The primary structure comprises 116 residues: NADH-quinone oxidoreductase subunit A (116 aa).

The next 3 membrane-spanning stretches (helical) occupy residues 3-23 (FTFL…VIAL), 61-81 (FAIL…WAVV), and 88-108 (QGLV…AYAW).

This sequence belongs to the complex I subunit 3 family. NDH-1 is composed of 14 different subunits. Subunits NuoA, H, J, K, L, M, N constitute the membrane sector of the complex.

The protein resides in the cell inner membrane. The enzyme catalyses a quinone + NADH + 5 H(+)(in) = a quinol + NAD(+) + 4 H(+)(out). In terms of biological role, NDH-1 shuttles electrons from NADH, via FMN and iron-sulfur (Fe-S) centers, to quinones in the respiratory chain. The immediate electron acceptor for the enzyme in this species is believed to be a menaquinone. Couples the redox reaction to proton translocation (for every two electrons transferred, four hydrogen ions are translocated across the cytoplasmic membrane), and thus conserves the redox energy in a proton gradient. The sequence is that of NADH-quinone oxidoreductase subunit A from Bacteroides thetaiotaomicron (strain ATCC 29148 / DSM 2079 / JCM 5827 / CCUG 10774 / NCTC 10582 / VPI-5482 / E50).